We begin with the raw amino-acid sequence, 312 residues long: Ribosomal RNA small subunit methyltransferase H (312 aa).

S-adenosyl-L-methionine contacts are provided by residues 35–37 (GGH), aspartate 55, phenylalanine 79, aspartate 101, and glutamine 108. The interval 286–306 (LKPSEHEVNENSRSRSSVLRV) is disordered. Residues 287–298 (KPSEHEVNENSR) are compositionally biased toward basic and acidic residues.

This sequence belongs to the methyltransferase superfamily. RsmH family.

It is found in the cytoplasm. It carries out the reaction cytidine(1402) in 16S rRNA + S-adenosyl-L-methionine = N(4)-methylcytidine(1402) in 16S rRNA + S-adenosyl-L-homocysteine + H(+). In terms of biological role, specifically methylates the N4 position of cytidine in position 1402 (C1402) of 16S rRNA. The chain is Ribosomal RNA small subunit methyltransferase H from Aeromonas hydrophila subsp. hydrophila (strain ATCC 7966 / DSM 30187 / BCRC 13018 / CCUG 14551 / JCM 1027 / KCTC 2358 / NCIMB 9240 / NCTC 8049).